The following is a 320-amino-acid chain: tRNA dimethylallyltransferase (320 aa).

5-12 (GPTAVGKS) lines the ATP pocket. Residue 7–12 (TAVGKS) participates in substrate binding. The interval 30–33 (DSMQ) is interaction with substrate tRNA.

Belongs to the IPP transferase family. As to quaternary structure, monomer. Requires Mg(2+) as cofactor.

The catalysed reaction is adenosine(37) in tRNA + dimethylallyl diphosphate = N(6)-dimethylallyladenosine(37) in tRNA + diphosphate. Catalyzes the transfer of a dimethylallyl group onto the adenine at position 37 in tRNAs that read codons beginning with uridine, leading to the formation of N6-(dimethylallyl)adenosine (i(6)A). In Heliobacterium modesticaldum (strain ATCC 51547 / Ice1), this protein is tRNA dimethylallyltransferase.